A 952-amino-acid polypeptide reads, in one-letter code: Germ layers disorganized gldi-3 (952 aa).

Residues 39–100 (KSFGRATTND…NGTYINDRRL (62 aa)) enclose the FHA domain. 3 disordered regions span residues 174–220 (IGPR…MPST), 483–639 (GTPK…ESTV), and 652–866 (AAQS…KERC). Polar residues-rich tracts occupy residues 179 to 195 (PSTT…STNG) and 202 to 220 (NRAS…MPST). Acidic residues predominate over residues 523 to 537 (EESEILDVVGTDEPD). The span at 553-568 (PEDHGRQTQNKIDKNV) shows a compositional bias: basic and acidic residues. Composition is skewed to polar residues over residues 569-584 (RMSS…TPSA) and 600-620 (VTSS…NPVS). A compositionally biased stretch (low complexity) spans 662-679 (SVSNTTSSTSASLTTSSV). Residues 685 to 706 (TSSKENTDQKRAVDDSSDESAR) are compositionally biased toward basic and acidic residues. Residues 715 to 724 (SATPSSTPAE) are compositionally biased toward low complexity. The segment covering 725–742 (SSKRKQKDTSSRKMKQLD) has biased composition (basic and acidic residues). The segment covering 761–772 (TKRRDKARRSTR) has biased composition (basic residues). A compositionally biased stretch (acidic residues) spans 789-800 (VEDEDETDDVQE). Basic and acidic residues-rich tracts occupy residues 823 to 832 (IKERKTKDKD) and 856 to 866 (PPKTEPSKERC).

The protein resides in the nucleus. In terms of biological role, potential transcription factor that may play a role in the regulation of genes involved in cell cycle G1/S transition. May bind to regulatory elements of genes. The sequence is that of Germ layers disorganized gldi-3 from Caenorhabditis elegans.